The following is a 149-amino-acid chain: Endonuclease I (149 aa).

As to quaternary structure, homodimer.

It carries out the reaction Endonucleolytic cleavage to 5'-phosphooligonucleotide end-products.. Its function is as follows. Junction-resolving enzyme that selectively binds and cleaves four-way (Holliday) DNA junctions present after viral genomic replication. These intermediates are created during DNA repair, processing of stalled replication forks and homologous genetic recombination. Introduces two nicks on the two non-crossing strands, at 5' sides of the junction. Also participates together with gp6 in the degradation of host chromosome to provide nucleotides for phage DNA synthesis. In Escherichia coli (Bacteriophage T7), this protein is Endonuclease I.